A 548-amino-acid polypeptide reads, in one-letter code: Probable malate:quinone oxidoreductase (548 aa).

A disordered region spans residues 521–548; the sequence is DKPQAADSTPKPQLKPQPVQKEVADIAL. Low complexity predominate over residues 530–541; it reads PKPQLKPQPVQK.

The protein belongs to the MQO family. Requires FAD as cofactor.

The catalysed reaction is (S)-malate + a quinone = a quinol + oxaloacetate. It participates in carbohydrate metabolism; tricarboxylic acid cycle; oxaloacetate from (S)-malate (quinone route): step 1/1. In Shigella sonnei (strain Ss046), this protein is Probable malate:quinone oxidoreductase.